The chain runs to 440 residues: (S)-N-methylcoclaurine 3'-hydroxylase-like protein (440 aa).

A helical; Signal-anchor for type II membrane protein transmembrane segment spans residues 2–21 (EIVTVALIAIVFTTFLYLIV). Residue cysteine 430 participates in heme binding.

This sequence belongs to the cytochrome P450 family. Heme is required as a cofactor.

Its subcellular location is the membrane. In terms of biological role, involved in the biosynthesis of benzylisoquinoline alkaloids. Probably involved in papaverine biosynthesis since its transcripts are abundant only in cultivars with substantial papaverine accumulation. May catalyze the 3'-hydroxylation of (S)-coclaurine. The protein is (S)-N-methylcoclaurine 3'-hydroxylase-like protein of Papaver somniferum (Opium poppy).